We begin with the raw amino-acid sequence, 122 residues long: Large ribosomal subunit protein uL14 (122 aa).

The protein belongs to the universal ribosomal protein uL14 family. Part of the 50S ribosomal subunit. Forms a cluster with proteins L3 and L19. In the 70S ribosome, L14 and L19 interact and together make contacts with the 16S rRNA in bridges B5 and B8.

Functionally, binds to 23S rRNA. Forms part of two intersubunit bridges in the 70S ribosome. The protein is Large ribosomal subunit protein uL14 of Thermoanaerobacter pseudethanolicus (strain ATCC 33223 / 39E) (Clostridium thermohydrosulfuricum).